We begin with the raw amino-acid sequence, 205 residues long: Proteasome subunit beta type-3 (205 aa).

N-acetylserine is present on Ser-2. Lys-77 carries the post-translational modification N6-acetyllysine.

The protein belongs to the peptidase T1B family. As to quaternary structure, the 26S proteasome consists of a 20S proteasome core and two 19S regulatory subunits. The 20S proteasome core is a barrel-shaped complex made of 28 subunits that are arranged in four stacked rings. The two outer rings are each formed by seven alpha subunits, and the two inner rings are formed by seven beta subunits. The proteolytic activity is exerted by three beta-subunits PSMB5, PSMB6 and PSMB7. As to expression, detected in liver (at protein level).

It localises to the cytoplasm. It is found in the nucleus. Non-catalytic component of the 20S core proteasome complex involved in the proteolytic degradation of most intracellular proteins. This complex plays numerous essential roles within the cell by associating with different regulatory particles. Associated with two 19S regulatory particles, forms the 26S proteasome and thus participates in the ATP-dependent degradation of ubiquitinated proteins. The 26S proteasome plays a key role in the maintenance of protein homeostasis by removing misfolded or damaged proteins that could impair cellular functions, and by removing proteins whose functions are no longer required. Associated with the PA200 or PA28, the 20S proteasome mediates ubiquitin-independent protein degradation. This type of proteolysis is required in several pathways including spermatogenesis (20S-PA200 complex) or generation of a subset of MHC class I-presented antigenic peptides (20S-PA28 complex). This chain is Proteasome subunit beta type-3 (Psmb3), found in Mus musculus (Mouse).